Reading from the N-terminus, the 509-residue chain is uncharacterized protein (509 aa).

Disordered stretches follow at residues 112–131 (KSKQ…SENE), 152–325 (NKNT…NNDS), 365–457 (NNIN…PNQG), and 488–509 (AQQP…VQQQ). Composition is skewed to low complexity over residues 116-127 (NNNGFNGHKGNF) and 153-184 (KNTI…SNTT). The segment covering 189 to 217 (YSDDDYQNEQNEFEEEDYDSNDDENDSHD) has biased composition (acidic residues). Positions 228–242 (KTTNQLKRKVSSSFT) are enriched in polar residues. Low complexity-rich tracts occupy residues 243–325 (NNNY…NNDS) and 365–397 (NNIN…TNND). Polar residues predominate over residues 398 to 422 (LKSSNHSNYDFNYNTNERLSHSPIQ). Positions 423–442 (THSSSNNSTPSNQSPTFPSN) are enriched in low complexity. Composition is skewed to polar residues over residues 443–457 (YISQ…PNQG) and 496–509 (NNNV…VQQQ).

This is an uncharacterized protein from Dictyostelium discoideum (Social amoeba).